Reading from the N-terminus, the 473-residue chain is Dihydrolipoyl dehydrogenase (473 aa).

Residues Glu-36–Cys-45, Lys-54, and Ala-117 contribute to the FAD site. An intrachain disulfide couples Cys-45 to Cys-50. NAD(+) contacts are provided by residues Gly-182–Ile-186, Asp-205, and Ala-270–Arg-273. FAD is bound by residues Asp-313 and Ala-321. The active-site Proton acceptor is the His-445.

Belongs to the class-I pyridine nucleotide-disulfide oxidoreductase family. As to quaternary structure, homodimer. FAD is required as a cofactor.

The protein resides in the cytoplasm. It catalyses the reaction N(6)-[(R)-dihydrolipoyl]-L-lysyl-[protein] + NAD(+) = N(6)-[(R)-lipoyl]-L-lysyl-[protein] + NADH + H(+). Lipoamide dehydrogenase is a component of the alpha-ketoacid dehydrogenase complexes. This chain is Dihydrolipoyl dehydrogenase (lpdA), found in Buchnera aphidicola subsp. Acyrthosiphon pisum (strain APS) (Acyrthosiphon pisum symbiotic bacterium).